The chain runs to 502 residues: Cytochrome P450 CYP94D109 (502 aa).

The helical transmembrane segment at 3 to 23 (SLSLIFISFITLIVFLVVSAS) threads the bilayer. Residue C437 coordinates heme.

The protein belongs to the cytochrome P450 family. As to expression, mainly expressed in leaves and, at low levels, in roots, fruits and stems.

It localises to the membrane. The protein operates within steroid metabolism; cholesterol metabolism. In terms of biological role, involved in the biosynthesis of spiroketal steroid and saponin natural products from cholesterol such as diosgenin and analogs (e.g. furostanol and spirostanol), plant defense compounds used as main precursors for the industrial production of steroid hormones. During the 5,6-spiroketalization of cholesterol, may catalyze the 27-monohydroxylation of furostanol-type steroid to an intermediate product that undergoes a stereospecific formation of the terminal heterocycle to yield diosgenin. This is Cytochrome P450 CYP94D109 from Paris polyphylla (Daiswa polyphylla).